Here is a 230-residue protein sequence, read N- to C-terminus: Urease accessory protein UreF (230 aa).

Belongs to the UreF family. In terms of assembly, ureD, UreF and UreG form a complex that acts as a GTP-hydrolysis-dependent molecular chaperone, activating the urease apoprotein by helping to assemble the nickel containing metallocenter of UreC. The UreE protein probably delivers the nickel.

The protein localises to the cytoplasm. In terms of biological role, required for maturation of urease via the functional incorporation of the urease nickel metallocenter. The protein is Urease accessory protein UreF of Cupriavidus pinatubonensis (strain JMP 134 / LMG 1197) (Cupriavidus necator (strain JMP 134)).